Here is a 353-residue protein sequence, read N- to C-terminus: Sphingosine 1-phosphate receptor 2 (353 aa).

Over 1-34 (MGSLYSEYLNPNKVQEHYNYTKETLETQETTSRQ) the chain is Extracellular. Residue N19 is glycosylated (N-linked (GlcNAc...) asparagine). A helical membrane pass occupies residues 35–59 (VASAFIVILCCAIVVENLLVLIAVA). The Cytoplasmic portion of the chain corresponds to 60-66 (RNSKFHS). A helical transmembrane segment spans residues 67 to 95 (AMYLFLGNLAASDLLAGVAFVANTLLSGS). Over 96–109 (VTLRLTPVQWFARE) the chain is Extracellular. The helical transmembrane segment at 110-128 (GSAFITLSASVFSLLAIAI) threads the bilayer. The Cytoplasmic portion of the chain corresponds to 129–147 (ERHVAIAKVKLYGSDKSCR). The helical transmembrane segment at 148 to 173 (MLLLIGASWLISLVLGGLPILGWNCL) threads the bilayer. Topologically, residues 174-189 (GHLEACSTVLPLYAKH) are extracellular. Residues 190 to 210 (YVLCVVTIFSIILLAIVALYV) form a helical membrane-spanning segment. Topologically, residues 211-233 (RIYCVVRSSHADMAAPQTLALLK) are cytoplasmic. Residues 234-255 (TVTIVLGVFIVCWLPAFSILLL) traverse the membrane as a helical segment. The Extracellular segment spans residues 256-271 (DYACPVHSCPILYKAH). Residues 272–292 (YFFAVSTLNSLLNPVIYTWRS) form a helical membrane-spanning segment. At 293 to 353 (RDLRREVLRP…PTFLEGNTVV (61 aa)) the chain is on the cytoplasmic side. C305 carries the S-palmitoyl cysteine lipid modification.

It belongs to the G-protein coupled receptor 1 family.

It is found in the cell membrane. Functionally, receptor for the lysosphingolipid sphingosine 1-phosphate (S1P). S1P is a bioactive lysophospholipid that elicits diverse physiological effects on most types of cells and tissues. When expressed in rat HTC4 hepatoma cells, is capable of mediating S1P-induced cell proliferation and suppression of apoptosis. Receptor for the chemokine-like protein FAM19A5. Mediates the inhibitory effect of FAM19A5 on vascular smooth muscle cell proliferation and migration. In lymphoid follicles, couples the binding of S1P to the activation of GNA13 and downstream inhibition of AKT activation leading to suppression of germinal center (GC) B cell growth and migration outside the GC niche. The chain is Sphingosine 1-phosphate receptor 2 (S1PR2) from Homo sapiens (Human).